A 343-amino-acid chain; its full sequence is Tetraacyldisaccharide 4'-kinase (343 aa).

ATP is bound at residue 58–65; the sequence is VAGGAGKT.

The protein belongs to the LpxK family.

It catalyses the reaction a lipid A disaccharide + ATP = a lipid IVA + ADP + H(+). The protein operates within glycolipid biosynthesis; lipid IV(A) biosynthesis; lipid IV(A) from (3R)-3-hydroxytetradecanoyl-[acyl-carrier-protein] and UDP-N-acetyl-alpha-D-glucosamine: step 6/6. Transfers the gamma-phosphate of ATP to the 4'-position of a tetraacyldisaccharide 1-phosphate intermediate (termed DS-1-P) to form tetraacyldisaccharide 1,4'-bis-phosphate (lipid IVA). This Polaromonas naphthalenivorans (strain CJ2) protein is Tetraacyldisaccharide 4'-kinase.